The sequence spans 734 residues: Photosystem I P700 chlorophyll a apoprotein A2 (734 aa).

8 helical membrane-spanning segments follow: residues 46 to 69 (IFAS…FHVA), 135 to 158 (LYTG…LHLQ), 175 to 199 (LNHH…HVAI), 273 to 291 (MAHH…GHMY), 330 to 353 (IHFQ…QHMY), 369 to 395 (AALY…IFFI), 417 to 439 (AIIS…LYVH), and 517 to 535 (FLVH…LILV). Residues Cys559 and Cys568 each coordinate [4Fe-4S] cluster. 2 helical membrane passes run 575 to 596 (AFYL…YWHW) and 643 to 665 (LSVW…MFLI). Residues His654, Met662, and Tyr670 each contribute to the chlorophyll a site. Trp671 contributes to the phylloquinone binding site. Residues 707–727 (LVGLAHFSVGYIFTYAAFLIA) form a helical membrane-spanning segment.

It belongs to the PsaA/PsaB family. As to quaternary structure, the PsaA/B heterodimer binds the P700 chlorophyll special pair and subsequent electron acceptors. PSI consists of a core antenna complex that captures photons, and an electron transfer chain that converts photonic excitation into a charge separation. The eukaryotic PSI reaction center is composed of at least 11 subunits. P700 is a chlorophyll a/chlorophyll a' dimer, A0 is one or more chlorophyll a, A1 is one or both phylloquinones and FX is a shared 4Fe-4S iron-sulfur center. is required as a cofactor.

Its subcellular location is the plastid. It is found in the chloroplast thylakoid membrane. It catalyses the reaction reduced [plastocyanin] + hnu + oxidized [2Fe-2S]-[ferredoxin] = oxidized [plastocyanin] + reduced [2Fe-2S]-[ferredoxin]. In terms of biological role, psaA and PsaB bind P700, the primary electron donor of photosystem I (PSI), as well as the electron acceptors A0, A1 and FX. PSI is a plastocyanin-ferredoxin oxidoreductase, converting photonic excitation into a charge separation, which transfers an electron from the donor P700 chlorophyll pair to the spectroscopically characterized acceptors A0, A1, FX, FA and FB in turn. Oxidized P700 is reduced on the lumenal side of the thylakoid membrane by plastocyanin. In Triticum aestivum (Wheat), this protein is Photosystem I P700 chlorophyll a apoprotein A2.